Consider the following 276-residue polypeptide: Large ribosomal subunit protein uL2 (276 aa).

Disordered stretches follow at residues 29 to 54 (PEKSLTKGLTKKAGRNNNGRVTSRRR) and 224 to 276 (AMNP…RGQR). Residues 256 to 276 (YKTRSKKKPSSKLIVKRRGQR) are compositionally biased toward basic residues.

This sequence belongs to the universal ribosomal protein uL2 family. Part of the 50S ribosomal subunit. Forms a bridge to the 30S subunit in the 70S ribosome.

Its function is as follows. One of the primary rRNA binding proteins. Required for association of the 30S and 50S subunits to form the 70S ribosome, for tRNA binding and peptide bond formation. It has been suggested to have peptidyltransferase activity; this is somewhat controversial. Makes several contacts with the 16S rRNA in the 70S ribosome. This is Large ribosomal subunit protein uL2 from Maridesulfovibrio salexigens (strain ATCC 14822 / DSM 2638 / NCIMB 8403 / VKM B-1763) (Desulfovibrio salexigens).